Here is a 249-residue protein sequence, read N- to C-terminus: Probable transcriptional regulatory protein Meso_3192 (249 aa).

This sequence belongs to the TACO1 family.

It is found in the cytoplasm. The protein is Probable transcriptional regulatory protein Meso_3192 of Chelativorans sp. (strain BNC1).